We begin with the raw amino-acid sequence, 461 residues long: Argininosuccinate lyase (461 aa).

Belongs to the lyase 1 family. Argininosuccinate lyase subfamily.

The protein resides in the cytoplasm. It carries out the reaction 2-(N(omega)-L-arginino)succinate = fumarate + L-arginine. The protein operates within amino-acid biosynthesis; L-arginine biosynthesis; L-arginine from L-ornithine and carbamoyl phosphate: step 3/3. This chain is Argininosuccinate lyase, found in Nitrosomonas europaea (strain ATCC 19718 / CIP 103999 / KCTC 2705 / NBRC 14298).